The sequence spans 451 residues: Glycylpeptide N-tetradecanoyltransferase (451 aa).

Residues 177–179 (LCI) and 185–189 (NKRLA) contribute to the tetradecanoyl-CoA site. The Proton acceptor; via carboxylate role is filled by Leu451.

Belongs to the NMT family. Monomer.

It localises to the cytoplasm. It catalyses the reaction N-terminal glycyl-[protein] + tetradecanoyl-CoA = N-tetradecanoylglycyl-[protein] + CoA + H(+). Its activity is regulated as follows. Competitively inhibited by SC-58272, a peptidomimetic derived from the N-terminal sequence of a natural substrate. Functionally, adds a myristoyl group to the N-terminal glycine residue of certain cellular proteins. Substrate specificity requires an N-terminal glycine in the nascent polypeptide substrates. Ser is present at position 5 in almost all known N-myristoyl proteins and Lys is commonly encountered at postion 6. Basic residues are preferred at positions 7 and 8. The chain is Glycylpeptide N-tetradecanoyltransferase (NMT1) from Candida albicans (strain SC5314 / ATCC MYA-2876) (Yeast).